A 545-amino-acid polypeptide reads, in one-letter code: CTP synthase (545 aa).

The interval 1 to 266 (MTTNYIFVTG…DDYICKRFSL (266 aa)) is amidoligase domain. Ser-14 contributes to the CTP binding site. Ser-14 provides a ligand contact to UTP. Residues 15-20 (SLGKGI) and Asp-72 each bind ATP. Residues Asp-72 and Glu-140 each coordinate Mg(2+). CTP-binding positions include 147–149 (DIE), 187–192 (KTKPTQ), and Lys-223. Residues 187-192 (KTKPTQ) and Lys-223 each bind UTP. 239-241 (KDV) contributes to the ATP binding site. Residues 291–542 (TIGMVGKYIE…VKAASEYQKR (252 aa)) form the Glutamine amidotransferase type-1 domain. Residue Gly-352 participates in L-glutamine binding. Cys-379 functions as the Nucleophile; for glutamine hydrolysis in the catalytic mechanism. L-glutamine contacts are provided by residues 380-383 (LGMQ), Glu-403, and Arg-470. Active-site residues include His-515 and Glu-517.

It belongs to the CTP synthase family. Homotetramer.

The enzyme catalyses UTP + L-glutamine + ATP + H2O = CTP + L-glutamate + ADP + phosphate + 2 H(+). It catalyses the reaction L-glutamine + H2O = L-glutamate + NH4(+). It carries out the reaction UTP + NH4(+) + ATP = CTP + ADP + phosphate + 2 H(+). It functions in the pathway pyrimidine metabolism; CTP biosynthesis via de novo pathway; CTP from UDP: step 2/2. Its activity is regulated as follows. Allosterically activated by GTP, when glutamine is the substrate; GTP has no effect on the reaction when ammonia is the substrate. The allosteric effector GTP functions by stabilizing the protein conformation that binds the tetrahedral intermediate(s) formed during glutamine hydrolysis. Inhibited by the product CTP, via allosteric rather than competitive inhibition. Its function is as follows. Catalyzes the ATP-dependent amination of UTP to CTP with either L-glutamine or ammonia as the source of nitrogen. Regulates intracellular CTP levels through interactions with the four ribonucleotide triphosphates. This chain is CTP synthase, found in Cronobacter sakazakii (strain ATCC BAA-894) (Enterobacter sakazakii).